Reading from the N-terminus, the 431-residue chain is Adenylosuccinate synthetase (431 aa).

GTP is bound by residues 12 to 18 (GDEGKGK) and 40 to 42 (GHT). Aspartate 13 (proton acceptor) is an active-site residue. 2 residues coordinate Mg(2+): aspartate 13 and glycine 40. IMP is bound by residues 13–16 (DEGK), 38–41 (NAGH), threonine 130, arginine 144, glutamine 224, threonine 239, and arginine 303. Histidine 41 acts as the Proton donor in catalysis. 299–305 (STTGRPR) lines the substrate pocket. GTP-binding positions include arginine 305, 331-333 (KAD), and 413-415 (SIG).

This sequence belongs to the adenylosuccinate synthetase family. In terms of assembly, homodimer. Mg(2+) is required as a cofactor.

The protein resides in the cytoplasm. It catalyses the reaction IMP + L-aspartate + GTP = N(6)-(1,2-dicarboxyethyl)-AMP + GDP + phosphate + 2 H(+). It functions in the pathway purine metabolism; AMP biosynthesis via de novo pathway; AMP from IMP: step 1/2. Plays an important role in the de novo pathway of purine nucleotide biosynthesis. Catalyzes the first committed step in the biosynthesis of AMP from IMP. The polypeptide is Adenylosuccinate synthetase (Cytophaga hutchinsonii (strain ATCC 33406 / DSM 1761 / CIP 103989 / NBRC 15051 / NCIMB 9469 / D465)).